A 307-amino-acid chain; its full sequence is Elongation factor Ts (307 aa).

Residues 79–82 (TDFV) are involved in Mg(2+) ion dislocation from EF-Tu.

It belongs to the EF-Ts family.

The protein localises to the cytoplasm. In terms of biological role, associates with the EF-Tu.GDP complex and induces the exchange of GDP to GTP. It remains bound to the aminoacyl-tRNA.EF-Tu.GTP complex up to the GTP hydrolysis stage on the ribosome. This is Elongation factor Ts from Bartonella bacilliformis (strain ATCC 35685 / KC583 / Herrer 020/F12,63).